We begin with the raw amino-acid sequence, 685 residues long: Augmin complex subunit dgt5 (685 aa).

2 coiled-coil regions span residues 87-165 (LQRY…NKIQ) and 342-379 (NMRNFNRSQNEFLREQIEQLRLELDAGAKQLENHDLKL).

Component of the augmin complex composed of dgt2, dgt3, dgt4, dgt5, dgt6, msd1, msd5 and wac. The complex interacts directly or indirectly with microtubules and is required for centrosome-independent generation of spindle microtubules.

It localises to the cytoplasm. The protein resides in the cytoskeleton. The protein localises to the spindle. It is found in the chromosome. Its subcellular location is the centromere. It localises to the kinetochore. The protein resides in the microtubule organizing center. The protein localises to the centrosome. In terms of biological role, as part of the augmin complex, plays a role in centrosome-independent generation of spindle microtubules. The complex is required for mitotic spindle assembly through its involvement in localizing gamma-tubulin to spindle microtubules. The sequence is that of Augmin complex subunit dgt5 from Drosophila melanogaster (Fruit fly).